Consider the following 790-residue polypeptide: MGLCCGSTDRVTKYSKEDIQQPTESEPLKYDPDFKGPLSKRSCTDLPCLFLFVTFLCAWGYVAYYAVQHGDLNRLLVPIDSDGRKCGVDSEVRDEPYLVFFNITECAKIDVPISGCSTTQVCVSQCPNQDFDFESANCNPSNVNEIRSKLICKQNVKKSDLTTCQIIRQYIKSQRCAQTMQKSTPLVNRCVSNIPEGQCTLIPKQFRQQPPITSTKFQTSAEQCKEQRELENILEEKISKLQSFLARYVNNLISVLTKNNSVHQLKYLNYHLVLQTLKKGNLKHNPLIITPYLITIHNITVLLTFQMIVEDILESWRMILVFIACSVLASLILIAMLRWIAKPLVWISIIGVITALSYGVYYSFRQYQQIRANPVAAHVNVSPNLSSLVNSWFKSDQTWLWILIALSVILIVLLLVVLVLRKRIVIAIALLKEGSKAVSASFSTVFFPLVPWILQAVVIVFSLLVLLFLASIGVPVYKVNGLNSSLTCVCTNGYMEGDICDPVAFNENCRDTSRIYDQERCLDAACHFQEVDTPGIVRFFHALNVIGFFWCICFVSAFSEMVLAFTFATWYWTRQKSRLPFFVLTRGVTHTVYYHLGTLAFGSLIIAICKIIRAILEYVDHKLKRYDNGFTRAVLCCCRCFFWCLESFLKFLNRNAYIMCAIYGKNFCSSAKDAFSLLTRNVLRVIALDKVTGFLFFLSKLLLASGMAAVTYTYFDSDLPKMQLNYPFVPAVLVFIGTFIIASIFFSVYSVAVDTLFLCFLEDIERNDGSAERPFYMSRGLQKILGKKQK.

A helical transmembrane segment spans residues 47–67; that stretch reads PCLFLFVTFLCAWGYVAYYAV. N-linked (GlcNAc...) asparagine glycosylation is found at N102 and N259. 3 helical membrane-spanning segments follow: residues 288–308, 319–339, and 344–364; these read IITP…FQMI, ILVF…MLRW, and LVWI…YYSF. Residue N384 is glycosylated (N-linked (GlcNAc...) asparagine). The next 2 membrane-spanning stretches (helical) occupy residues 400–420 and 449–469; these read LWIL…VLVL and LVPW…LLFL. A glycan (N-linked (GlcNAc...) asparagine) is linked at N483. 4 helical membrane-spanning segments follow: residues 545–565, 592–612, 691–711, and 728–748; these read VIGF…VLAF, VYYH…CKII, VTGF…AAVT, and FVPA…FFSV.

The protein belongs to the CTL (choline transporter-like) family.

It is found in the membrane. The sequence is that of Choline transporter-like 2 from Anopheles gambiae (African malaria mosquito).